A 92-amino-acid chain; its full sequence is Integration host factor subunit beta (92 aa).

The protein belongs to the bacterial histone-like protein family. Heterodimer of an alpha and a beta chain.

Its function is as follows. This protein is one of the two subunits of integration host factor, a specific DNA-binding protein that functions in genetic recombination as well as in transcriptional and translational control. The polypeptide is Integration host factor subunit beta (Azotobacter vinelandii (strain DJ / ATCC BAA-1303)).